The chain runs to 198 residues: MPGLFLTLEGLDGSGKTTQARRLAAFLEAQGRPVLLTREPGGGLPEVRSLLLTQELSPEAEYLLFSADRAEHVRKVILPGLAAGKVVISDRYLDSSLAYQGYGRGLPLPWLREVAREATRGLKPRLTFLLDLPPEAALRRVRRPDRLEGLGLEFFRRVREGYLALARAEPGRFVVLDATLPEEEIARAIQAHLRPLLP.

10–17 serves as a coordination point for ATP; the sequence is GLDGSGKT.

The protein belongs to the thymidylate kinase family.

It carries out the reaction dTMP + ATP = dTDP + ADP. Its function is as follows. Phosphorylation of dTMP to form dTDP in both de novo and salvage pathways of dTTP synthesis. The sequence is that of Thymidylate kinase from Thermus thermophilus (strain ATCC BAA-163 / DSM 7039 / HB27).